The chain runs to 263 residues: Benzil reductase ((S)-benzoin forming) IRC24 (263 aa).

Isoleucine 7 and asparagine 86 together coordinate NADP(+). The active-site Proton donor is the serine 143. Residues tyrosine 157, lysine 161, valine 190, and threonine 192 each contribute to the NADP(+) site. Catalysis depends on tyrosine 157, which acts as the Proton acceptor. Catalysis depends on lysine 161, which acts as the Lowers pKa of active site Tyr.

This sequence belongs to the short-chain dehydrogenases/reductases (SDR) family.

The catalysed reaction is (S)-benzoin + NADP(+) = benzil + NADPH + H(+). It catalyses the reaction 2-hydroxy-1-phenyl-1-propanone + NADP(+) = 1-phenyl-1,2-propanedione + NADPH + H(+). In terms of biological role, reduces benzil stereospecifically to (S)-benzoin. Also reduces 1-phenyl-1,2-propanedione to 2-hydroxy-1-phenyl-1-propanone. Is probably involved in a pathway contributing to genomic integrity. This chain is Benzil reductase ((S)-benzoin forming) IRC24 (IRC24), found in Saccharomyces cerevisiae (strain ATCC 204508 / S288c) (Baker's yeast).